The following is a 584-amino-acid chain: 2-succinyl-5-enolpyruvyl-6-hydroxy-3-cyclohexene-1-carboxylate synthase (584 aa).

Belongs to the TPP enzyme family. MenD subfamily. Homodimer. It depends on Mg(2+) as a cofactor. Mn(2+) serves as cofactor. Requires thiamine diphosphate as cofactor.

It catalyses the reaction isochorismate + 2-oxoglutarate + H(+) = 5-enolpyruvoyl-6-hydroxy-2-succinyl-cyclohex-3-ene-1-carboxylate + CO2. The protein operates within quinol/quinone metabolism; 1,4-dihydroxy-2-naphthoate biosynthesis; 1,4-dihydroxy-2-naphthoate from chorismate: step 2/7. It participates in quinol/quinone metabolism; menaquinone biosynthesis. Its function is as follows. Catalyzes the thiamine diphosphate-dependent decarboxylation of 2-oxoglutarate and the subsequent addition of the resulting succinic semialdehyde-thiamine pyrophosphate anion to isochorismate to yield 2-succinyl-5-enolpyruvyl-6-hydroxy-3-cyclohexene-1-carboxylate (SEPHCHC). This chain is 2-succinyl-5-enolpyruvyl-6-hydroxy-3-cyclohexene-1-carboxylate synthase, found in Bacillus thuringiensis subsp. konkukian (strain 97-27).